Consider the following 270-residue polypeptide: Extracellular metalloprotease MCYG_04966 (270 aa).

The N-terminal stretch at 1 to 19 (MRLSLFLSGLAAAGSIVSA) is a signal peptide. The N-linked (GlcNAc...) asparagine glycan is linked to asparagine 135. Histidine 184 lines the Zn(2+) pocket. The active site involves glutamate 185. Histidine 188 provides a ligand contact to Zn(2+). N-linked (GlcNAc...) asparagine glycosylation is present at asparagine 199. The interval 208-227 (VADTPPQSKKTSGCPNSQDS) is disordered. Polar residues predominate over residues 212-227 (PPQSKKTSGCPNSQDS). The cysteines at positions 221 and 247 are disulfide-linked.

Belongs to the peptidase M43B family.

It localises to the secreted. Secreted metalloproteinase that allows assimilation of proteinaceous substrates. Plays a pivotal role as a pathogenicity determinant during infections and contributes to the ability of the pathogen to persist within the mammalian host. In Arthroderma otae (strain ATCC MYA-4605 / CBS 113480) (Microsporum canis), this protein is Extracellular metalloprotease MCYG_04966.